Here is a 245-residue protein sequence, read N- to C-terminus: Protein-L-isoaspartate O-methyltransferase 1 (245 aa).

The active site involves Ser-76.

It belongs to the methyltransferase superfamily. L-isoaspartyl/D-aspartyl protein methyltransferase family.

Its subcellular location is the cytoplasm. The enzyme catalyses [protein]-L-isoaspartate + S-adenosyl-L-methionine = [protein]-L-isoaspartate alpha-methyl ester + S-adenosyl-L-homocysteine. In terms of biological role, catalyzes the methyl esterification of L-isoaspartyl residues in peptides and proteins that result from spontaneous decomposition of normal L-aspartyl and L-asparaginyl residues. It plays a role in the repair and/or degradation of damaged proteins. The protein is Protein-L-isoaspartate O-methyltransferase 1 of Rhodopseudomonas palustris (strain HaA2).